A 1578-amino-acid chain; its full sequence is MAEPTKIKILGQESIIADFGLWRNYVAKDLISGCPSTTYVLITDTNIGSIYTPGFQKTFEDAATAVSPAPRLLVYHCPPGEVSKSRQTKADIEDWMLSQSPPCGRDTVVIALGGGVIGDLTGFVASTYMRGVRYVQVPTTLLAMVDSSIGGKTAIDTPLGKNLIGAIWQPTRIYIDLEFLETLPVREFVNGMAEVIKTAAISSEEEFTALEDNAEAILTAVRSERKPGQRWFEGIEDILKARILASARHKAYVVSADEREGGLRNLLNWGHSIGHAIEAILTPQVLHGECVAIGMVKEAELARHLGILKGVAVARIVKCIAAYGLPTSLKDSRIRKLTAGKHCSVDQLLFNMALDKKNDGPKKKIVLLSAIGRTYEPKASVVPNEDIGVVLAPSIEVHPGVEPASNIICIPPGSKSISNRALVLAALGSGTCRVKNLLHSDDTEVMLNALERLGAATFSWEEEGEVLVVNGKGGNLQASPSELYLGNAGTASRFLTTVATLANASSVDSSILTGNNRMKQRPIGDLVDALTANGASVEYVERKGSLPLKVAASGGFAGGRINLAAKVSSQYVSSLLMCAPYAKEPVTLKLVGGKPISQPYIDMTTAMMRSFGIDVQKSTTEEHTYHIPQGRYVNPAEYVIESDASSATYPLAIAAITGTTCTVPNIGSKSLQGDARFAVEVLGPMGCTVKQTDTSTTVVGPSDGILRPLPNVDMEPMTDAFLTASVLAAVARGDGASHTTRIYGIANQRVKECNRIKAMKDELAKFGVVCREHDDGLEIDGIDRSTLRQPAGGVYCYDDHRVAFSFSVLSLVAPQPTLILEKECVGKTWPGWWDTLRQKFSAKLEGKELKEEESSPLAGAGRATASVFIIGMRGAGKTTTGRWVAKTLNRPFVDLDTELENVEGQTIPDIVKQRGWQGFRDAELSLLQRTLKERSSGYVLACGGGIVEIPEARKLLIDYHKNKGNVMLIMRDIKQVMDFLNIDKTRPAYVEDMMGVWLRRKPWFQECSNIQYYSQHATGKLAKASEDFTRFFNVVTGEADSLSIIKRKKHSFFVSLTLPDLRTAGDILEKVCVGSDAVELRVDLLKDPASDSDIPSVDYVAEQMAFLRSYVSLPLIFTIRTKSQGGRFPDDAHDAAMELYRLAFRSGSEFVDLEIAFPDEMLRAVTEMKGYSKIIASHHDPKGELSWANMSWMKYYNRALEYGDIIKLVGVAKNLDDNTALRKFKSWAEEAHETPLIAINMGDNGQLSRILNGFMTPVSHPSLPFKAAPGQLSATEIRKGLSLMGEIKQKKFAVFGTPVSGSRSPVLHNTLFSQAGLPHEYGRLETANVEDVKDFIRSPDFGGASVTIPLKLDIMPLLDHITPEAEIIGAVNTIIPVADGDKPARLVGSNTDWQGMTLSLHNAGVETANKDASALVIGGGGTARAAIYALHSMGFSPIYVIGRSAPKLQSMVSTFPSSYNIQVIDSPETLKTIPTVAIGTIPADKPIDPVMRETLCHMFERAQEADADVVKTGEKAHRVLLEMAYKPSVTALMQLASDSNWHTIPGLEVLVGQGWYQFKHWTGISPLYEDARAAVLSS.

Positions 1–384 (MAEPTKIKIL…YEPKASVVPN (384 aa)) are 3-dehydroquinate synthase. Residues 44 to 46 (DTN), 81 to 84 (EVSK), 114 to 116 (GGV), and D119 contribute to the NAD(+) site. A 7-phospho-2-dehydro-3-deoxy-D-arabino-heptonate-binding site is contributed by R130. 139-140 (TT) is an NAD(+) binding site. Positions 146 and 152 each coordinate 7-phospho-2-dehydro-3-deoxy-D-arabino-heptonate. K161 is an NAD(+) binding site. N162 serves as a coordination point for 7-phospho-2-dehydro-3-deoxy-D-arabino-heptonate. NAD(+) is bound by residues 179–182 (FLET) and N190. E194 contributes to the Zn(2+) binding site. Residues 194 to 197 (EVIK) and K250 contribute to the 7-phospho-2-dehydro-3-deoxy-D-arabino-heptonate site. E260 (proton acceptor; for 3-dehydroquinate synthase activity) is an active-site residue. Residues 264 to 268 (RNLLN) and H271 contribute to the 7-phospho-2-dehydro-3-deoxy-D-arabino-heptonate site. Residue H271 coordinates Zn(2+). Catalysis depends on H275, which acts as the Proton acceptor; for 3-dehydroquinate synthase activity. 7-phospho-2-dehydro-3-deoxy-D-arabino-heptonate contacts are provided by H287 and K356. H287 provides a ligand contact to Zn(2+). Positions 397 to 842 (VHPGVEPASN…WDTLRQKFSA (446 aa)) are EPSP synthase. The For EPSP synthase activity role is filled by C824. Residues 864–1055 (TASVFIIGMR…KRKKHSFFVS (192 aa)) are shikimate kinase. 871–878 (GMRGAGKT) serves as a coordination point for ATP. The tract at residues 1056–1276 (LTLPDLRTAG…AAPGQLSATE (221 aa)) is 3-dehydroquinase. H1179 acts as the Proton acceptor; for 3-dehydroquinate dehydratase activity in catalysis. K1207 functions as the Schiff-base intermediate with substrate; for 3-dehydroquinate dehydratase activity in the catalytic mechanism. The tract at residues 1289-1578 (QKKFAVFGTP…EDARAAVLSS (290 aa)) is shikimate dehydrogenase.

The protein in the N-terminal section; belongs to the sugar phosphate cyclases superfamily. Dehydroquinate synthase family. This sequence in the 2nd section; belongs to the EPSP synthase family. In the 3rd section; belongs to the shikimate kinase family. It in the 4th section; belongs to the type-I 3-dehydroquinase family. The protein in the C-terminal section; belongs to the shikimate dehydrogenase family. As to quaternary structure, homodimer. Zn(2+) is required as a cofactor.

It localises to the cytoplasm. The enzyme catalyses 7-phospho-2-dehydro-3-deoxy-D-arabino-heptonate = 3-dehydroquinate + phosphate. It catalyses the reaction 3-dehydroquinate = 3-dehydroshikimate + H2O. It carries out the reaction shikimate + NADP(+) = 3-dehydroshikimate + NADPH + H(+). The catalysed reaction is shikimate + ATP = 3-phosphoshikimate + ADP + H(+). The enzyme catalyses 3-phosphoshikimate + phosphoenolpyruvate = 5-O-(1-carboxyvinyl)-3-phosphoshikimate + phosphate. Its pathway is metabolic intermediate biosynthesis; chorismate biosynthesis; chorismate from D-erythrose 4-phosphate and phosphoenolpyruvate: step 2/7. The protein operates within metabolic intermediate biosynthesis; chorismate biosynthesis; chorismate from D-erythrose 4-phosphate and phosphoenolpyruvate: step 3/7. It participates in metabolic intermediate biosynthesis; chorismate biosynthesis; chorismate from D-erythrose 4-phosphate and phosphoenolpyruvate: step 4/7. It functions in the pathway metabolic intermediate biosynthesis; chorismate biosynthesis; chorismate from D-erythrose 4-phosphate and phosphoenolpyruvate: step 5/7. Its pathway is metabolic intermediate biosynthesis; chorismate biosynthesis; chorismate from D-erythrose 4-phosphate and phosphoenolpyruvate: step 6/7. Functionally, the AROM polypeptide catalyzes 5 consecutive enzymatic reactions in prechorismate polyaromatic amino acid biosynthesis. The chain is Pentafunctional AROM polypeptide from Aspergillus flavus (strain ATCC 200026 / FGSC A1120 / IAM 13836 / NRRL 3357 / JCM 12722 / SRRC 167).